Here is a 569-residue protein sequence, read N- to C-terminus: Urease subunit alpha (569 aa).

In terms of domain architecture, Urease spans glycine 131–leucine 569. The Ni(2+) site is built by histidine 136, histidine 138, and lysine 219. Position 219 is an N6-carboxylysine (lysine 219). Histidine 221 contacts substrate. Ni(2+) is bound by residues histidine 248 and histidine 274. The active-site Proton donor is histidine 322. Ni(2+) is bound at residue aspartate 362.

Belongs to the metallo-dependent hydrolases superfamily. Urease alpha subunit family. In terms of assembly, heterotrimer of UreA (gamma), UreB (beta) and UreC (alpha) subunits. Three heterotrimers associate to form the active enzyme. Ni cation is required as a cofactor. Carboxylation allows a single lysine to coordinate two nickel ions.

Its subcellular location is the cytoplasm. The enzyme catalyses urea + 2 H2O + H(+) = hydrogencarbonate + 2 NH4(+). It functions in the pathway nitrogen metabolism; urea degradation; CO(2) and NH(3) from urea (urease route): step 1/1. This chain is Urease subunit alpha, found in Prochlorococcus marinus (strain MIT 9215).